We begin with the raw amino-acid sequence, 590 residues long: MAEETAALSTEKTEDTSTAPSTSAEKADGIDIDTEAKRLMGAGQKHLVMKDVRSAVNLFQEASSLLAKQYGETADECAEAFYSYGMSLLELARLENGVLGNALEGMPEDDEEEAEKEEDPNIPSADNLDEKEREQLREQVYDAMAEDQRAPDDTSESEAKGKPEGDSKDKEADEKMKNGQKETEKVTDDLKIDSASRDVPMDKSGKGEPPESKDAETLVEQKESKPETLKEKSIETKEKDLSKEKTDAKETANQSPDSTEVAEEKMDSEASESKESTSIPPTENEANKPDDPEKMEEEEEGEDSEENEDGTEENEGTEEKETEEEDVGNLQLAWEMLDLCKTIFKRQQSKEAQLKAAQAHQKLGEVCIESENYSQAVEDFLACLNIQKEHLEEHDRLLAETHYHLGLAYQYSSKHEEAISHFTQSIGVIEKRMDVLTKQLEASVGELVDEVKKEMDELKDLLPDIKEKIEDSKEAQKNATVTEKALKETLVGGSSGFSKENGSTSSSSAVEKSGDSTVPVTNCVSDISHLVRKKRKTEEESPLKDKDAKKSKQEPVANGAGNGDAVVPTNEEAEKAEEASMETATVESTA.

A disordered region spans residues 1–30; that stretch reads MAEETAALSTEKTEDTSTAPSTSAEKADGI. The stretch at 36 to 69 is one TPR 1 repeat; it reads AKRLMGAGQKHLVMKDVRSAVNLFQEASSLLAKQ. The segment at 102–328 is disordered; the sequence is ALEGMPEDDE…EKETEEEDVG (227 aa). Over residues 106 to 120 the composition is skewed to acidic residues; the sequence is MPEDDEEEAEKEEDP. 2 stretches are compositionally biased toward basic and acidic residues: residues 128 to 250 and 262 to 275; these read LDEK…DAKE and AEEK…ESKE. Positions 293–327 are enriched in acidic residues; it reads EKMEEEEEGEDSEENEDGTEENEGTEEKETEEEDV. TPR repeat units follow at residues 357–390 and 399–432; these read AQAH…QKEH and AETH…IEKR. Residues 492–590 are disordered; that stretch reads GGSSGFSKEN…METATVESTA (99 aa). Over residues 496–525 the composition is skewed to polar residues; it reads GFSKENGSTSSSSAVEKSGDSTVPVTNCVS. Residues 531-537 carry the Nuclear localization signal motif; that stretch reads VRKKRKT. Residues 536 to 553 are compositionally biased toward basic and acidic residues; the sequence is KTEEESPLKDKDAKKSKQ.

The protein belongs to the NASP family.

Its subcellular location is the nucleus. This protein is involved in nucleosome assembly. It is bound to H3 and H4 in the absence of DNA, but released from H3 and H4 in the presence of DNA. This Xenopus laevis (African clawed frog) protein is Histone-binding protein N1/N2.